A 268-amino-acid polypeptide reads, in one-letter code: Undecaprenyl-diphosphatase (268 aa).

8 consecutive transmembrane segments (helical) span residues 8–28 (VILGIIEGVTEFLPVSSTGHL), 41–61 (AFWDSFTVLIQLGAILAIVGL), 83–103 (FVIGVLVAFLPAVVVGLVAGK), 108–128 (VLFNPWVVCFTLIVGGAILLW), 144–164 (FPLLMYLYIGIAQCVAMIPGV), 184–204 (AAEFSFFLAIPTMIGAFAYDF), 218–238 (IVAIGFVVSFITAVIVVKTFL), and 246–266 (FVVFAWWRVIVGTLGLIALAL).

The protein belongs to the UppP family.

It is found in the cell inner membrane. The catalysed reaction is di-trans,octa-cis-undecaprenyl diphosphate + H2O = di-trans,octa-cis-undecaprenyl phosphate + phosphate + H(+). In terms of biological role, catalyzes the dephosphorylation of undecaprenyl diphosphate (UPP). Confers resistance to bacitracin. The sequence is that of Undecaprenyl-diphosphatase from Bradyrhizobium diazoefficiens (strain JCM 10833 / BCRC 13528 / IAM 13628 / NBRC 14792 / USDA 110).